A 570-amino-acid polypeptide reads, in one-letter code: Urease subunit alpha (570 aa).

The region spanning 135 to 570 (GGLDIHIHFN…ELPLAKRYSL (436 aa)) is the Urease domain. 3 residues coordinate Ni(2+): H140, H142, and K219. K219 bears the N6-carboxylysine mark. H221 is a substrate binding site. Positions 248 and 274 each coordinate Ni(2+). H322 serves as the catalytic Proton donor. Ni(2+) is bound at residue D362.

It belongs to the metallo-dependent hydrolases superfamily. Urease alpha subunit family. As to quaternary structure, heterotrimer of UreA (gamma), UreB (beta) and UreC (alpha) subunits. Three heterotrimers associate to form the active enzyme. It depends on Ni cation as a cofactor. Carboxylation allows a single lysine to coordinate two nickel ions.

The protein resides in the cytoplasm. It carries out the reaction urea + 2 H2O + H(+) = hydrogencarbonate + 2 NH4(+). Its pathway is nitrogen metabolism; urea degradation; CO(2) and NH(3) from urea (urease route): step 1/1. This chain is Urease subunit alpha, found in Haloquadratum walsbyi (strain DSM 16790 / HBSQ001).